Reading from the N-terminus, the 506-residue chain is Asparagine--tRNA ligase (506 aa).

The protein belongs to the class-II aminoacyl-tRNA synthetase family. As to quaternary structure, homodimer.

Its subcellular location is the cytoplasm. It carries out the reaction tRNA(Asn) + L-asparagine + ATP = L-asparaginyl-tRNA(Asn) + AMP + diphosphate + H(+). This is Asparagine--tRNA ligase from Onion yellows phytoplasma (strain OY-M).